The sequence spans 251 residues: DNA repair protein RecO (251 aa).

It belongs to the RecO family.

Functionally, involved in DNA repair and RecF pathway recombination. This chain is DNA repair protein RecO, found in Acetivibrio thermocellus (strain ATCC 27405 / DSM 1237 / JCM 9322 / NBRC 103400 / NCIMB 10682 / NRRL B-4536 / VPI 7372) (Clostridium thermocellum).